Consider the following 85-residue polypeptide: Small ribosomal subunit protein bS18 (85 aa).

It belongs to the bacterial ribosomal protein bS18 family. Part of the 30S ribosomal subunit. Forms a tight heterodimer with protein bS6.

Binds as a heterodimer with protein bS6 to the central domain of the 16S rRNA, where it helps stabilize the platform of the 30S subunit. This chain is Small ribosomal subunit protein bS18, found in Helicobacter acinonychis (strain Sheeba).